We begin with the raw amino-acid sequence, 1915 residues long: Protein TIC 214 (1915 aa).

Helical transmembrane passes span 18 to 38 (IINSVVVVGLYYGFLTTFSIG), 64 to 84 (FITGQLMMFISIYYAPLHLAL), 90 to 110 (ITVLVLPYLLFHFFWHNHKYF), 126 to 146 (LNIQCVFLNNLIFPLFNHFIL), 174 to 194 (VGWLIGHILFMKWVELVLIWI), and 230 to 250 (IFSILLFITCIYYLGRMPSTL). Disordered stretches follow at residues 260-319 (KMKQ…EIRV) and 1566-1631 (NKNI…GSVL). The segment covering 267-277 (SEEETDVEIET) has biased composition (acidic residues). Residues 279–288 (SETKETKEEQ) show a composition bias toward basic and acidic residues. Over residues 304-315 (EKEDPDKIDETE) the composition is skewed to acidic residues. The segment covering 1587–1601 (KSLELENRNQEEKES) has biased composition (basic and acidic residues). Polar residues predominate over residues 1602 to 1631 (SSQGDLGSNAQNQGNLGPNAQNQGNLGSVL).

This sequence belongs to the TIC214 family. Part of the Tic complex.

Its subcellular location is the plastid. The protein localises to the chloroplast inner membrane. In terms of biological role, involved in protein precursor import into chloroplasts. May be part of an intermediate translocation complex acting as a protein-conducting channel at the inner envelope. This is Protein TIC 214 from Platanus occidentalis (Sycamore).